Consider the following 298-residue polypeptide: GTPase Era (298 aa).

The 168-residue stretch at 4-171 (RAGFVALIGR…KEKIVSFLPE (168 aa)) folds into the Era-type G domain. The interval 12–19 (GRTNVGKS) is G1. 12 to 19 (GRTNVGKS) serves as a coordination point for GTP. Residues 38–42 (QTTRN) are G2. A G3 region spans residues 59-62 (DTPG). Residues 59–63 (DTPGI) and 121–124 (NKID) each bind GTP. Positions 121 to 124 (NKID) are G4. Residues 150 to 152 (ISA) are G5. A KH type-2 domain is found at 202 to 280 (LEEEVPHGVY…FLQLWVKVRK (79 aa)).

This sequence belongs to the TRAFAC class TrmE-Era-EngA-EngB-Septin-like GTPase superfamily. Era GTPase family. Monomer.

The protein resides in the cytoplasm. It is found in the cell membrane. Functionally, an essential GTPase that binds both GDP and GTP, with rapid nucleotide exchange. Plays a role in 16S rRNA processing and 30S ribosomal subunit biogenesis and possibly also in cell cycle regulation and energy metabolism. In Caldanaerobacter subterraneus subsp. tengcongensis (strain DSM 15242 / JCM 11007 / NBRC 100824 / MB4) (Thermoanaerobacter tengcongensis), this protein is GTPase Era.